Reading from the N-terminus, the 529-residue chain is Scarecrow-like protein 13 (529 aa).

Positions alanine 51 to isoleucine 81 are enriched in polar residues. Positions alanine 51–leucine 84 are disordered. The region spanning leucine 146 to lysine 525 is the GRAS domain. The interval leucine 153–asparagine 213 is leucine repeat I (LRI). A VHIID region spans residues methionine 232–glycine 297. The VHIID motif lies at valine 263–aspartate 267. The interval leucine 313–histidine 345 is leucine repeat II (LRII). Residues valine 354–asparagine 448 are PFYRE. The tract at residues alanine 451 to lysine 525 is SAW.

It belongs to the GRAS family. In terms of tissue distribution, expressed in roots, hypocotyls, cotyledons, shoot apex, leaves, flowers and siliques.

It is found in the cytoplasm. The protein resides in the nucleus. Probable transcription factor that acts as a positive regulator of continuous red light signals downstream of phytochrome B (phyB). Required for the regulation of hypocotyl elongation during de-etiolation. May be required to modulate phytochrome A (phyA) signal transduction in a phyB-independent way. The polypeptide is Scarecrow-like protein 13 (SCL13) (Arabidopsis thaliana (Mouse-ear cress)).